Here is a 109-residue protein sequence, read N- to C-terminus: Nucleoid-associated protein SO_2014 (109 aa).

Belongs to the YbaB/EbfC family. In terms of assembly, homodimer.

It localises to the cytoplasm. It is found in the nucleoid. Its function is as follows. Binds to DNA and alters its conformation. May be involved in regulation of gene expression, nucleoid organization and DNA protection. The chain is Nucleoid-associated protein SO_2014 from Shewanella oneidensis (strain ATCC 700550 / JCM 31522 / CIP 106686 / LMG 19005 / NCIMB 14063 / MR-1).